The sequence spans 148 residues: Aspartate carbamoyltransferase regulatory chain (148 aa).

Residues C106, C111, C134, and C137 each coordinate Zn(2+).

This sequence belongs to the PyrI family. Contains catalytic and regulatory chains. It depends on Zn(2+) as a cofactor.

Involved in allosteric regulation of aspartate carbamoyltransferase. In Methanococcus vannielii (strain ATCC 35089 / DSM 1224 / JCM 13029 / OCM 148 / SB), this protein is Aspartate carbamoyltransferase regulatory chain.